Here is a 347-residue protein sequence, read N- to C-terminus: Phenylalanine--tRNA ligase alpha subunit (347 aa).

Glutamate 262 contacts Mg(2+).

This sequence belongs to the class-II aminoacyl-tRNA synthetase family. Phe-tRNA synthetase alpha subunit type 1 subfamily. As to quaternary structure, tetramer of two alpha and two beta subunits. The cofactor is Mg(2+).

The protein localises to the cytoplasm. It carries out the reaction tRNA(Phe) + L-phenylalanine + ATP = L-phenylalanyl-tRNA(Phe) + AMP + diphosphate + H(+). The polypeptide is Phenylalanine--tRNA ligase alpha subunit (Roseiflexus sp. (strain RS-1)).